The primary structure comprises 509 residues: Poly(A) RNA polymerase GLD2-B (509 aa).

Positions 88 to 125 (PGSPPSSFQNRKRRSDEGNSPYDVKRQRFQSPQEQTVN) are disordered. A compositionally biased stretch (polar residues) spans 116-125 (FQSPQEQTVN). D240 and D242 together coordinate Mg(2+). Positions 409 to 462 (LGDLLLGFLKYFAVEFDWSKDIISLREAKALPRTDDYEWRNKYICVEEPFDGSN) constitute a PAP-associated domain.

It belongs to the DNA polymerase type-B-like family. GLD2 subfamily. As to quaternary structure, component of a complex at least composed of cpeb1, cpsf1, tent2/gld2, pabpc1/ePAB, parn and sympk. Following oocyte maturation, parn is expelled from the complex. Interacts with rbfox2. Interacts with sympk. Requires Mg(2+) as cofactor. It depends on Mn(2+) as a cofactor.

It localises to the cytoplasm. It catalyses the reaction RNA(n) + ATP = RNA(n)-3'-adenine ribonucleotide + diphosphate. Functionally, cytoplasmic poly(A) RNA polymerase that adds successive AMP monomers to the 3'-end of specific RNAs, forming a poly(A) tail. In contrast to the canonical nuclear poly(A) RNA polymerase, it only adds poly(A) to selected cytoplasmic mRNAs during oocyte maturation. Plays a central role during oocyte maturation by mediating polyadenylation of dormant mRNAs, which contain 5'AAUAAA-3' sequence in their 3'-UTR. In immature oocytes, polyadenylation of poly(A) tails is counteracted by the ribonuclease parn. During maturation parn is excluded from the ribonucleoprotein complex, allowing poly(A) elongation and activation of mRNAs. May not play a role in replication-dependent histone mRNA degradation. This Xenopus laevis (African clawed frog) protein is Poly(A) RNA polymerase GLD2-B.